The chain runs to 535 residues: Serum response factor-binding protein 1 (535 aa).

Coiled-coil stretches lie at residues 5–27 and 107–177; these read LNLNNEVVKLRKDVKKVKVLIIR and LKQK…EKCK. 6 stretches are compositionally biased toward basic and acidic residues: residues 128–151, 159–191, 205–325, 361–376, 406–432, and 460–472; these read AAEGEREREKDEPEQVTKIKETKK, KNTEEIKSAKEHVKEEKCKNLLEDSDKGTEKAL, AENK…ERPV, DKEKEYFDDSTEERFY, SDKDGSKQKEEKVPPTKEKAQTSEVQK, and TKRETNFRQERNK. Disordered stretches follow at residues 128 to 435 and 453 to 535; these read AAEG…KEIP and TKPK…VFDD.

It is found in the cytoplasm. It localises to the perinuclear region. Functionally, may be involved in regulating transcriptional activation of cardiac genes during the aging process. May play a role in biosynthesis and/or processing of SLC2A4 in adipose cells. The polypeptide is Serum response factor-binding protein 1 (Xenopus tropicalis (Western clawed frog)).